The primary structure comprises 363 residues: Anhydro-N-acetylmuramic acid kinase (363 aa).

9-16 (GTSLDGID) provides a ligand contact to ATP.

This sequence belongs to the anhydro-N-acetylmuramic acid kinase family.

It carries out the reaction 1,6-anhydro-N-acetyl-beta-muramate + ATP + H2O = N-acetyl-D-muramate 6-phosphate + ADP + H(+). It functions in the pathway amino-sugar metabolism; 1,6-anhydro-N-acetylmuramate degradation. Its pathway is cell wall biogenesis; peptidoglycan recycling. Functionally, catalyzes the specific phosphorylation of 1,6-anhydro-N-acetylmuramic acid (anhMurNAc) with the simultaneous cleavage of the 1,6-anhydro ring, generating MurNAc-6-P. Is required for the utilization of anhMurNAc either imported from the medium or derived from its own cell wall murein, and thus plays a role in cell wall recycling. The protein is Anhydro-N-acetylmuramic acid kinase of Nitrosomonas europaea (strain ATCC 19718 / CIP 103999 / KCTC 2705 / NBRC 14298).